The sequence spans 59 residues: MAKSKNHTAHNQTRKAHRNGIKKPKTYKYPSLKGVDPKFRRNHKHALHGTAKALAAAKK.

A compositionally biased stretch (basic residues) spans 1 to 26 (MAKSKNHTAHNQTRKAHRNGIKKPKT). The disordered stretch occupies residues 1–37 (MAKSKNHTAHNQTRKAHRNGIKKPKTYKYPSLKGVDP). A Glycyl lysine isopeptide (Lys-Gly) (interchain with G-Cter in ubiquitin) cross-link involves residue K52.

Belongs to the eukaryotic ribosomal protein eL29 family. As to quaternary structure, component of the large ribosomal subunit (LSU). Mature yeast ribosomes consist of a small (40S) and a large (60S) subunit. The 40S small subunit contains 1 molecule of ribosomal RNA (18S rRNA) and 33 different proteins (encoded by 57 genes). The large 60S subunit contains 3 rRNA molecules (25S, 5.8S and 5S rRNA) and 46 different proteins (encoded by 81 genes).

It localises to the cytoplasm. Its function is as follows. Component of the ribosome, a large ribonucleoprotein complex responsible for the synthesis of proteins in the cell. The small ribosomal subunit (SSU) binds messenger RNAs (mRNAs) and translates the encoded message by selecting cognate aminoacyl-transfer RNA (tRNA) molecules. The large subunit (LSU) contains the ribosomal catalytic site termed the peptidyl transferase center (PTC), which catalyzes the formation of peptide bonds, thereby polymerizing the amino acids delivered by tRNAs into a polypeptide chain. The nascent polypeptides leave the ribosome through a tunnel in the LSU and interact with protein factors that function in enzymatic processing, targeting, and the membrane insertion of nascent chains at the exit of the ribosomal tunnel. This Saccharomyces cerevisiae (strain ATCC 204508 / S288c) (Baker's yeast) protein is Large ribosomal subunit protein eL29.